The sequence spans 449 residues: Glucose-6-phosphate isomerase (449 aa).

Glu-291 serves as the catalytic Proton donor. Residues His-312 and Lys-426 contribute to the active site.

The protein belongs to the GPI family.

It is found in the cytoplasm. The catalysed reaction is alpha-D-glucose 6-phosphate = beta-D-fructose 6-phosphate. It participates in carbohydrate biosynthesis; gluconeogenesis. The protein operates within carbohydrate degradation; glycolysis; D-glyceraldehyde 3-phosphate and glycerone phosphate from D-glucose: step 2/4. Functionally, catalyzes the reversible isomerization of glucose-6-phosphate to fructose-6-phosphate. This Clostridium botulinum (strain Eklund 17B / Type B) protein is Glucose-6-phosphate isomerase.